The primary structure comprises 261 residues: 5'-nucleotidase SurE (261 aa).

The a divalent metal cation site is built by Asp8, Asp9, Ser39, and Asn94.

Belongs to the SurE nucleotidase family. A divalent metal cation serves as cofactor.

It localises to the cytoplasm. The catalysed reaction is a ribonucleoside 5'-phosphate + H2O = a ribonucleoside + phosphate. Nucleotidase that shows phosphatase activity on nucleoside 5'-monophosphates. This chain is 5'-nucleotidase SurE, found in Archaeoglobus fulgidus (strain ATCC 49558 / DSM 4304 / JCM 9628 / NBRC 100126 / VC-16).